A 569-amino-acid chain; its full sequence is 4-coumarate-CoA ligase 2 (569 aa).

A disordered region spans residues 1 to 24 (MITIAESHPQIHHSPPDTTAPSTP). Residues 216-220 (SSGTT), H265, 337-339 (AAP), 359-360 (QG), T364, D448, R463, and K554 each bind ATP. The segment at 290–359 (EMEGMLETIQ…GRLPQAVLGQ (70 aa)) is SBD1. Residues 360 to 427 (GYGMTEAGPV…VRGPQIMKGY (68 aa)) form an SBD2 region.

The protein belongs to the ATP-dependent AMP-binding enzyme family. In terms of tissue distribution, mostly expressed in stems, and, to a lower extent, in bulbs.

It catalyses the reaction (E)-4-coumarate + ATP + CoA = (E)-4-coumaroyl-CoA + AMP + diphosphate. It participates in phytoalexin biosynthesis; 3,4',5-trihydroxystilbene biosynthesis; 3,4',5-trihydroxystilbene from trans-4-coumarate: step 1/2. In terms of biological role, produces CoA thioesters of a variety of hydroxy- and methoxy-substituted cinnamic acids, which are used to synthesize several phenylpropanoid-derived compounds, including anthocyanins, flavonoids, isoflavonoids, coumarins, lignin, suberin and wall-bound phenolics. The polypeptide is 4-coumarate-CoA ligase 2 (Narcissus pseudonarcissus (Daffodil)).